The chain runs to 440 residues: Protein disulfide-isomerase A6 (440 aa).

The signal sequence occupies residues 1–19 (MARLVLGLVSCTFFLAVSG). Thioredoxin domains follow at residues 20 to 133 (LYSS…ALRQ) and 151 to 287 (QGRG…EDIA). A disulfide bridge links Cys55 with Cys58. Phosphoserine is present on residues Ser129, Ser156, and Ser158. Residues 139-161 (LGGRSGGYSSGKQGRGDSSSKKD) form a disordered region. Residues 152–161 (GRGDSSSKKD) are compositionally biased toward basic and acidic residues. Cys190 and Cys193 are joined by a disulfide. The disordered stretch occupies residues 399-440 (GGGSFPTITPREPWDGKDGELPVEDDIDLSDVELDDLEKDEL). Residues 419 to 440 (LPVEDDIDLSDVELDDLEKDEL) show a composition bias toward acidic residues. Ser428 is subject to Phosphoserine. Positions 437–440 (KDEL) match the Prevents secretion from ER motif.

The protein belongs to the protein disulfide isomerase family. In terms of assembly, part of a large chaperone multiprotein complex comprising DNAJB11, HSP90B1, HSPA5, HYOU, PDIA2, PDIA4, PDIA6, PPIB, SDF2L1, UGGT1 and very small amounts of ERP29, but not, or at very low levels, CALR nor CANX. Interacts with MICA on the surface of tumor cells, leading to MICA disulfide bond reduction which is required for its release from tumor cells. Interacts with ITGB3 following platelet stimulation. Interacts with ERN1; the interaction is direct. Interacts with EIF2AK3.

The protein localises to the endoplasmic reticulum lumen. It is found in the cell membrane. The protein resides in the melanosome. The catalysed reaction is Catalyzes the rearrangement of -S-S- bonds in proteins.. Its function is as follows. May function as a chaperone that inhibits aggregation of misfolded proteins. Negatively regulates the unfolded protein response (UPR) through binding to UPR sensors such as ERN1, which in turn inactivates ERN1 signaling. May also regulate the UPR via the EIF2AK3 UPR sensor. Plays a role in platelet aggregation and activation by agonists such as convulxin, collagen and thrombin. The polypeptide is Protein disulfide-isomerase A6 (Pdia6) (Mus musculus (Mouse)).